Consider the following 285-residue polypeptide: Hypersensitive-induced reaction 1 protein (285 aa).

G2 is lipidated: N-myristoyl glycine. The stretch at 118–190 forms a coiled coil; that stretch reads FEQKNEIAKS…EKILQIKRAE (73 aa).

In terms of assembly, homo- and heterodimer. Interacts with LRR1 (via LRR domain). In terms of tissue distribution, constitutively expressed in stems, roots and flowers, but not in leaves and fruits.

In terms of biological role, positive regulator of hypersensitive response (HR)-like cell death. May be involved in potassium ion channel regulation. The polypeptide is Hypersensitive-induced reaction 1 protein (Capsicum annuum (Capsicum pepper)).